We begin with the raw amino-acid sequence, 207 residues long: Enolase (207 aa).

Glutamine 162 provides a ligand contact to (2R)-2-phosphoglycerate. Glutamate 204 acts as the Proton donor in catalysis.

It belongs to the enolase family.

It localises to the cytoplasm. The protein localises to the secreted. It is found in the cell surface. The enzyme catalyses (2R)-2-phosphoglycerate = phosphoenolpyruvate + H2O. The protein operates within carbohydrate degradation; glycolysis; pyruvate from D-glyceraldehyde 3-phosphate: step 4/5. Its function is as follows. Catalyzes the reversible conversion of 2-phosphoglycerate (2-PG) into phosphoenolpyruvate (PEP). It is essential for the degradation of carbohydrates via glycolysis. This Campylobacter fetus protein is Enolase.